Consider the following 411-residue polypeptide: Ubiquitin-binding protein CUE5 (411 aa).

Residues 1–12 (MEEKEGIKDSSL) are compositionally biased toward basic and acidic residues. Disordered stretches follow at residues 1–102 (MEEK…NPIL) and 142–411 (ESGK…DDEM). K15 participates in a covalent cross-link: Glycyl lysine isopeptide (Lys-Gly) (interchain with G-Cter in ubiquitin). Phosphoserine is present on residues S21 and S36. The span at 25–58 (DISKTTDVDLNSDGKKDNDTSAKDGTPKVEEKVN) shows a compositional bias: basic and acidic residues. A Glycyl lysine isopeptide (Lys-Gly) (interchain with G-Cter in ubiquitin) cross-link involves residue K59. Phosphothreonine is present on T70. K76 is covalently cross-linked (Glycyl lysine isopeptide (Lys-Gly) (interchain with G-Cter in ubiquitin)). S91 bears the Phosphoserine mark. A CUE domain is found at 97–140 (KENPILQELKDAFPNLEEKYIKAVIIASQGVLSPAFNALLFLSD). A Glycyl lysine isopeptide (Lys-Gly) (interchain with G-Cter in ubiquitin) cross-link involves residue K156. T167 is subject to Phosphothreonine. A compositionally biased stretch (basic and acidic residues) spans 209 to 219 (NPNEREQHHED). Residue S220 is modified to Phosphoserine. Residues 230-242 (VEKDLPELTDRAG) show a composition bias toward basic and acidic residues. Residues 245–256 (LQDTANKVSNWI) show a composition bias toward polar residues. Phosphoserine occurs at positions 309 and 318. A Phosphothreonine modification is found at T346. S348 carries the post-translational modification Phosphoserine. T352 carries the post-translational modification Phosphothreonine. K354 participates in a covalent cross-link: Glycyl lysine isopeptide (Lys-Gly) (interchain with G-Cter in ubiquitin). A phosphothreonine mark is found at T364 and T367. The short motif at 373–376 (WQPL) is the AIM element. K396 is covalently cross-linked (Glycyl lysine isopeptide (Lys-Gly) (interchain with G-Cter in ubiquitin)). Acidic residues predominate over residues 399 to 411 (DEDEFLINSDDEM). Phosphoserine is present on S407.

Interacts with ATG8 (via AIM motif), CLB2, and ubiquitin (via CUE domain).

It is found in the cytoplasm. Its function is as follows. Connects the ubiquitin pathway to autophagy by functioning as a ubiquitin-ATG8 adapter and thus mediating autophagic clearance of ubiquitin conjugates under starvation conditions. The CUE5-dependent selective autophagy pathway plays an important role in clearance of cytotoxic protein aggregates. Not required for cytoplasmic to vacuole pathway (cvt), mitophagy, pexophagy, or ribophagy. In Saccharomyces cerevisiae (strain ATCC 204508 / S288c) (Baker's yeast), this protein is Ubiquitin-binding protein CUE5.